Consider the following 235-residue polypeptide: Aspartate/glutamate leucyltransferase (235 aa).

This sequence belongs to the R-transferase family. Bpt subfamily.

The protein resides in the cytoplasm. It carries out the reaction N-terminal L-glutamyl-[protein] + L-leucyl-tRNA(Leu) = N-terminal L-leucyl-L-glutamyl-[protein] + tRNA(Leu) + H(+). It catalyses the reaction N-terminal L-aspartyl-[protein] + L-leucyl-tRNA(Leu) = N-terminal L-leucyl-L-aspartyl-[protein] + tRNA(Leu) + H(+). In terms of biological role, functions in the N-end rule pathway of protein degradation where it conjugates Leu from its aminoacyl-tRNA to the N-termini of proteins containing an N-terminal aspartate or glutamate. This chain is Aspartate/glutamate leucyltransferase, found in Pseudomonas savastanoi pv. phaseolicola (strain 1448A / Race 6) (Pseudomonas syringae pv. phaseolicola (strain 1448A / Race 6)).